A 549-amino-acid polypeptide reads, in one-letter code: Thermosome subunit (549 aa).

Over residues 528–538 (EKEKEGEKGGG) the composition is skewed to basic and acidic residues. The tract at residues 528–549 (EKEKEGEKGGGSEEFSGSSDLD) is disordered. A compositionally biased stretch (low complexity) spans 540–549 (EEFSGSSDLD).

Belongs to the TCP-1 chaperonin family. As to quaternary structure, forms an oligomeric complex of eight-membered rings.

Functionally, molecular chaperone; binds unfolded polypeptides in vitro, and has a weak ATPase activity. This is Thermosome subunit (ths) from Pyrococcus horikoshii (strain ATCC 700860 / DSM 12428 / JCM 9974 / NBRC 100139 / OT-3).